A 48-amino-acid polypeptide reads, in one-letter code: Large ribosomal subunit protein bL33A (48 aa).

Belongs to the bacterial ribosomal protein bL33 family.

The sequence is that of Large ribosomal subunit protein bL33A from Limosilactobacillus fermentum (strain NBRC 3956 / LMG 18251) (Lactobacillus fermentum).